The following is a 180-amino-acid chain: MQIKLANPRGFCAGVDRAIEIVNRALEVFGPPIYVRHEVVHNKFVVEDLRARGAIFVEELDQVKDDVIVIFSAHGVSQAVRTEAAGRGLKVFDATCPLVTKVHIEVARYSRDGRECILIGHAGHPEVEGTMGQYDASNGGAIYLVEDEKDVANLQVHNPERLAFVTQTTLSMDDTSRVID.

Cys12 is a [4Fe-4S] cluster binding site. Residues His41 and His74 each contribute to the (2E)-4-hydroxy-3-methylbut-2-enyl diphosphate site. Residues His41 and His74 each coordinate dimethylallyl diphosphate. Isopentenyl diphosphate-binding residues include His41 and His74. Cys96 serves as a coordination point for [4Fe-4S] cluster. His124 contacts (2E)-4-hydroxy-3-methylbut-2-enyl diphosphate. His124 is a dimethylallyl diphosphate binding site. His124 is an isopentenyl diphosphate binding site. Glu126 functions as the Proton donor in the catalytic mechanism. Residue Thr168 coordinates (2E)-4-hydroxy-3-methylbut-2-enyl diphosphate.

Belongs to the IspH family. [4Fe-4S] cluster serves as cofactor.

It carries out the reaction isopentenyl diphosphate + 2 oxidized [2Fe-2S]-[ferredoxin] + H2O = (2E)-4-hydroxy-3-methylbut-2-enyl diphosphate + 2 reduced [2Fe-2S]-[ferredoxin] + 2 H(+). The catalysed reaction is dimethylallyl diphosphate + 2 oxidized [2Fe-2S]-[ferredoxin] + H2O = (2E)-4-hydroxy-3-methylbut-2-enyl diphosphate + 2 reduced [2Fe-2S]-[ferredoxin] + 2 H(+). It participates in isoprenoid biosynthesis; dimethylallyl diphosphate biosynthesis; dimethylallyl diphosphate from (2E)-4-hydroxy-3-methylbutenyl diphosphate: step 1/1. Its pathway is isoprenoid biosynthesis; isopentenyl diphosphate biosynthesis via DXP pathway; isopentenyl diphosphate from 1-deoxy-D-xylulose 5-phosphate: step 6/6. Its function is as follows. Catalyzes the conversion of 1-hydroxy-2-methyl-2-(E)-butenyl 4-diphosphate (HMBPP) into a mixture of isopentenyl diphosphate (IPP) and dimethylallyl diphosphate (DMAPP). Acts in the terminal step of the DOXP/MEP pathway for isoprenoid precursor biosynthesis. This chain is 4-hydroxy-3-methylbut-2-enyl diphosphate reductase, found in Pseudomonas fluorescens.